Reading from the N-terminus, the 61-residue chain is ALYITEECTYCGACEPECPTNAISAGSEIYVIDAAGCTECVGFADAPACAAVCPAECIVQG.

The 4Fe-4S ferredoxin-type domain occupies Leu-2–Glu-28. Cys-8, Cys-11, Cys-14, Cys-18, Cys-37, Cys-40, Cys-49, and Cys-53 together coordinate [4Fe-4S] cluster.

[4Fe-4S] cluster is required as a cofactor.

Its function is as follows. Ferredoxins are iron-sulfur proteins that transfer electrons in a wide variety of metabolic reactions. The chain is Ferredoxin from Chlorobaculum thiosulfatiphilum (Chlorobium limicola f.sp. thiosulfatophilum).